A 336-amino-acid polypeptide reads, in one-letter code: Ribose-phosphate pyrophosphokinase (336 aa).

ATP-binding positions include 43 to 45 (DQE) and 102 to 103 (RQ). Mg(2+)-binding residues include histidine 136 and aspartate 178. Lysine 201 is an active-site residue. D-ribose 5-phosphate-binding positions include arginine 203, aspartate 227, and 231 to 235 (DTAGT).

This sequence belongs to the ribose-phosphate pyrophosphokinase family. Class I subfamily. Homohexamer. Mg(2+) is required as a cofactor.

It is found in the cytoplasm. It catalyses the reaction D-ribose 5-phosphate + ATP = 5-phospho-alpha-D-ribose 1-diphosphate + AMP + H(+). The protein operates within metabolic intermediate biosynthesis; 5-phospho-alpha-D-ribose 1-diphosphate biosynthesis; 5-phospho-alpha-D-ribose 1-diphosphate from D-ribose 5-phosphate (route I): step 1/1. Its function is as follows. Involved in the biosynthesis of the central metabolite phospho-alpha-D-ribosyl-1-pyrophosphate (PRPP) via the transfer of pyrophosphoryl group from ATP to 1-hydroxyl of ribose-5-phosphate (Rib-5-P). In Cereibacter sphaeroides (strain KD131 / KCTC 12085) (Rhodobacter sphaeroides), this protein is Ribose-phosphate pyrophosphokinase.